A 546-amino-acid polypeptide reads, in one-letter code: Chaperonin GroEL 1 (546 aa).

ATP-binding positions include 30–33 (TLGP), Lys-51, 87–91 (DGTTT), Gly-415, 479–481 (NAA), and Asp-495. Residues 526–546 (KEDAPMPGGMPGGMGGMGMDM) are disordered. The span at 534 to 546 (GMPGGMGGMGMDM) shows a compositional bias: gly residues.

Belongs to the chaperonin (HSP60) family. In terms of assembly, forms a cylinder of 14 subunits composed of two heptameric rings stacked back-to-back. Interacts with the co-chaperonin GroES.

It is found in the cytoplasm. It carries out the reaction ATP + H2O + a folded polypeptide = ADP + phosphate + an unfolded polypeptide.. In terms of biological role, together with its co-chaperonin GroES, plays an essential role in assisting protein folding. The GroEL-GroES system forms a nano-cage that allows encapsulation of the non-native substrate proteins and provides a physical environment optimized to promote and accelerate protein folding. The sequence is that of Chaperonin GroEL 1 from Burkholderia pseudomallei (strain K96243).